The chain runs to 247 residues: Probable dihydroorotate dehydrogenase B (NAD(+)), electron transfer subunit (247 aa).

An FAD-binding FR-type domain is found at 1–87 (MLRRVTLKET…RGPYGNGFKE (87 aa)). [2Fe-2S] cluster is bound by residues cysteine 200, cysteine 205, cysteine 208, and cysteine 216.

It belongs to the PyrK family. In terms of assembly, heterotetramer of 2 PyrK and 2 PyrD type B subunits. Requires [2Fe-2S] cluster as cofactor. It depends on FAD as a cofactor.

It participates in pyrimidine metabolism; UMP biosynthesis via de novo pathway; orotate from (S)-dihydroorotate (NAD(+) route): step 1/1. Functionally, responsible for channeling the electrons from the oxidation of dihydroorotate from the FMN redox center in the PyrD type B subunit to the ultimate electron acceptor NAD(+). This is Probable dihydroorotate dehydrogenase B (NAD(+)), electron transfer subunit from Pyrococcus horikoshii (strain ATCC 700860 / DSM 12428 / JCM 9974 / NBRC 100139 / OT-3).